The chain runs to 445 residues: Arabinooligosaccharide-binding protein (445 aa).

The N-terminal stretch at 1–20 (MGKNILFFSFVGVMVLVLVA) is a signal peptide. Cys21 carries the N-palmitoyl cysteine lipid modification. Residue Cys21 is the site of S-diacylglycerol cysteine attachment.

This sequence belongs to the bacterial solute-binding protein 1 family. As to quaternary structure, the complex is composed of two ATP-binding proteins (MsmX), two transmembrane proteins (AraP and AraQ) and a solute-binding protein (AraN).

Its subcellular location is the cell membrane. In terms of biological role, part of the ABC transporter complex AraNPQ involved in the uptake of arabinooligosaccharides. AraN captures the substrate and delivers it to the two transmembrane components. This is Arabinooligosaccharide-binding protein (araN) from Halalkalibacterium halodurans (strain ATCC BAA-125 / DSM 18197 / FERM 7344 / JCM 9153 / C-125) (Bacillus halodurans).